We begin with the raw amino-acid sequence, 450 residues long: Ornithine decarboxylase (450 aa).

Residue Lys59 is modified to N6-(pyridoxal phosphate)lysine. Pyridoxal 5'-phosphate contacts are provided by residues Ser190, Gly227, and 264-267; that span reads EPGR. The residue at position 293 (Ser293) is a Phosphoserine; by CK2. Substrate is bound at residue 321-322; sequence YD. Catalysis depends on Cys350, which acts as the Proton donor; shared with dimeric partner. Residue Asp351 coordinates substrate. A pyridoxal 5'-phosphate-binding site is contributed by Tyr379.

The protein belongs to the Orn/Lys/Arg decarboxylase class-II family. In terms of assembly, homodimer. Only the dimer is catalytically active, as the active sites are constructed of residues from both monomers. The cofactor is pyridoxal 5'-phosphate.

The catalysed reaction is L-ornithine + H(+) = putrescine + CO2. It participates in amine and polyamine biosynthesis; putrescine biosynthesis via L-ornithine pathway; putrescine from L-ornithine: step 1/1. Its activity is regulated as follows. Inhibited by antizymes (AZs) in response to polyamine levels. AZs inhibit the assembly of the functional homodimer by binding to ODC monomers and targeting them for ubiquitin-independent proteolytic destruction by the 26S proteasome. Catalyzes the first and rate-limiting step of polyamine biosynthesis that converts ornithine into putrescine, which is the precursor for the polyamines, spermidine and spermine. Polyamines are essential for cell proliferation and are implicated in cellular processes, ranging from DNA replication to apoptosis. The polypeptide is Ornithine decarboxylase (ODC1) (Gallus gallus (Chicken)).